Reading from the N-terminus, the 589-residue chain is Ectoderm-neural cortex protein 1 (589 aa).

The BTB domain occupies 46–114 (TDVLLHAGNR…AYSSRVIINE (69 aa)). Kelch repeat units lie at residues 296-340 (ALFL…AIGC), 341-388 (KVYI…ELKH), 389-444 (CLYV…SAKL), 446-492 (LFAF…VLGN), 494-538 (IFIM…ASGN), and 539-585 (KLYV…STWK).

Binds to RB1. Hypophosphorylated RB1 associates with ENC1 during neuronal differentiation, while hyperphosphorylated RB1 associates with ENC1 in undifferentiating cells. Part of a complex that contains CUL3, RBX1 and ENC1. Interacts indirectly with KEAP1. Ubiquitinated by E3 ubiquitin ligase complex formed by CUL3 and RBX1 and probably targeted for proteasome-independent degradation. Quinone-induced oxidative stress increases its ubiquitination. In terms of tissue distribution, primarily expressed in the nervous system.

It is found in the nucleus matrix. It localises to the cytoplasm. The protein localises to the cytoskeleton. In terms of biological role, actin-binding protein involved in the regulation of neuronal process formation and in differentiation of neural crest cells. Down-regulates transcription factor NF2L2/NRF2 by decreasing the rate of protein synthesis and not via a ubiquitin-mediated proteasomal degradation mechanism. The protein is Ectoderm-neural cortex protein 1 (Enc1) of Mus musculus (Mouse).